We begin with the raw amino-acid sequence, 160 residues long: uncharacterized protein (160 aa).

A helical transmembrane segment spans residues 137-157 (YNILFVVVILLLLFVAWRCYV).

Its subcellular location is the host membrane. The protein localises to the virion. This is an uncharacterized protein from Acanthamoeba polyphaga mimivirus (APMV).